Consider the following 654-residue polypeptide: MGRWAWGPSLCPLPGMALLLLLLLLLVPHGAQPQAGGNLTEPPEPNATVTPGTPMIPVTSVTPVTPATSAPEAQGPRGRGLTPPPRAAPSSSSPGDPVLTVDGQPCRFPFRYGGRMLHACTSEGSAHRKWCATTHNYDRDRAWGYCVQAPVSREGPAALDSCASSPCLNGGSCSHTQDPGSYHCTCPMAFTGRNCDTEKCFDETRYEHLEAGDRWARVSQGQVEQCECAGGQIRCEGTRHTACLSSPCLNGGTCHLIVATGTTVCSCPPGHAGRLCNIVPSQRCFVGNGTEYRGVASTAASGLSCLAWNSDLLYQELHVDSVGAAALLGLGPHAYCRNPDKDERPWCYVVKDSALSWEYCRLAACESLARIPSLTTAVLLSQAEPAPVGRQTCGKRHKKRTFLRPRIIGGSSSLPGSHPWLAAIYIGDSFCAGSLVHTCWVVSAAHCFSNSPRRESVLVVLGQHFFNQTTDVTQTFGIEKYIPYPMYSVFNPSDHDLVLIRLKKKGDRCAIRSQFVQPICLPEPSSPFPAGHKCQIAGWGHQDENVSGYSSSLREALVPLVADHKCSSPEVYGADISPNMLCAGYFDCKSDACQGDSGGPLACEKNGVAYLYGIISWGDGCGRLNKPGVYTRVAKYVDWIKDRIWPSKRPSDPS.

The N-terminal stretch at 1–33 (MGRWAWGPSLCPLPGMALLLLLLLLLVPHGAQP) is a signal peptide. A disordered region spans residues 34-100 (QAGGNLTEPP…SSSPGDPVLT (67 aa)). Residues 34-370 (QAGGNLTEPP…RLAACESLAR (337 aa)) constitute a propeptide, removed in mature form. 2 N-linked (GlcNAc...) asparagine glycosylation sites follow: N38 and N46. Residues 57–81 (PVTSVTPVTPATSAPEAQGPRGRGL) are compositionally biased toward low complexity. Residues 101 to 148 (VDGQPCRFPFRYGGRMLHACTSEGSAHRKWCATTHNYDRDRAWGYCVQ) enclose the Fibronectin type-II domain. Intrachain disulfides connect C106–C131, C120–C146, C162–C173, C167–C184, C186–C195, C200–C228, C226–C235, C243–C254, C248–C265, C267–C276, C284–C365, C305–C347, C336–C360, C393–C520, C431–C447, C439–C509, C534–C603, C566–C582, and C593–C621. The region spanning 158 to 196 (ALDSCASSPCLNGGSCSHTQDPGSYHCTCPMAFTGRNCD) is the EGF-like 1 domain. The Fibronectin type-I domain occupies 198 to 238 (EKCFDETRYEHLEAGDRWARVSQGQVEQCECAGGQIRCEGT). In terms of domain architecture, EGF-like 2 spans 239-277 (RHTACLSSPCLNGGTCHLIVATGTTVCSCPPGHAGRLCN). Residues 283 to 365 (RCFVGNGTEY…SWEYCRLAAC (83 aa)) form the Kringle domain. N288 carries N-linked (GlcNAc...) asparagine glycosylation. Residues 407–645 (IIGGSSSLPG…YVDWIKDRIW (239 aa)) form the Peptidase S1 domain. The Charge relay system role is filled by H446. 2 N-linked (GlcNAc...) asparagine glycosylation sites follow: N467 and N491. Catalysis depends on D496, which acts as the Charge relay system. N545 carries an N-linked (GlcNAc...) asparagine glycan. The Charge relay system role is filled by S597.

It belongs to the peptidase S1 family. Heterodimer of a short chain and a long chain linked by a disulfide bond. The active form of HGFAC presents in the serum is derived from the COOH-terminal region of the precursor by the cleavage of bonds between Arg-370 and Ile-371 and Arg-406 and Ile-407. Liver.

It localises to the secreted. Functionally, serine protease that hydrolyzes the inactive zymogen hepatocyte growth factor (HGFsc) to an activated disulfide-linked heterodimer, then initiating hepatocyte growth factor receptor signaling pathway. This Canis lupus familiaris (Dog) protein is Hepatocyte growth factor activator serine proteases (HGFAC).